Reading from the N-terminus, the 224-residue chain is MPGGLLLGDEAPNFEANTTIGHIRFHDFLGDSWGILFSHPRDFTPVCTTELGRAAKLAPEFAKRNVKLIALSIDSVEDHFAWSKDINAYNGAAPTEKLPFPIIDDKDRDLAILLGMLDPAEKDEKGMPVTARVVFIFGPDKKLKLSILYPATTGRNFDEILRVVDSLQLTASNPVATPVDWKKGESVMVLPTLPEEEAKQLFPKGVFTKELPSGKKYLRYTPQP.

The 165-residue stretch at 5–169 (LLLGDEAPNF…ILRVVDSLQL (165 aa)) folds into the Thioredoxin domain. The interval 31 to 40 (DSWGILFSHP) is required and sufficient for targeting to lysosomes and lamellar bodies. T44 bears the Phosphothreonine mark. The Cysteine sulfenic acid (-SOH) intermediate; for peroxidase activity role is filled by C47. At K63 the chain carries N6-acetyllysine. Residue Y89 is modified to Phosphotyrosine. The active-site For phospholipase activity is the D140. Residue T177 is modified to Phosphothreonine; by MAPK. K209 is subject to N6-acetyllysine; alternate. Position 209 is an N6-succinyllysine; alternate (K209).

Belongs to the peroxiredoxin family. Prx6 subfamily. Homodimer. Interacts with GSTP1; mediates PRDX6 glutathionylation and regeneration. Interacts with APEX1. Interacts with STH. May interact with FAM168B. May interact with HTR2A. In terms of processing, phosphorylation at Thr-177 by MAP kinases increases the phospholipase activity of the enzyme. Phosphorylated form exhibits a greater lysophosphatidylcholine acyltransferase activity compared to the non-phosphorylated form. Post-translationally, irreversibly inactivated by overoxidation of Cys-47 to sulfinic acid (Cys-SO(2)H) and sulfonic acid (Cys-SO(3)H) forms upon oxidative stress.

It is found in the cytoplasm. The protein localises to the lysosome. The enzyme catalyses a hydroperoxide + 2 glutathione = an alcohol + glutathione disulfide + H2O. The catalysed reaction is a 1,2-diacyl-sn-glycero-3-phosphocholine + H2O = a 1-acyl-sn-glycero-3-phosphocholine + a fatty acid + H(+). It carries out the reaction a 1-acyl-sn-glycero-3-phosphocholine + an acyl-CoA = a 1,2-diacyl-sn-glycero-3-phosphocholine + CoA. It catalyses the reaction 1-hexadecanoyl-sn-glycero-3-phosphocholine + hexadecanoyl-CoA = 1,2-dihexadecanoyl-sn-glycero-3-phosphocholine + CoA. The enzyme catalyses 1,2-dihexadecanoyl-sn-glycero-3-phosphocholine + H2O = 1-hexadecanoyl-sn-glycero-3-phosphocholine + hexadecanoate + H(+). In terms of biological role, thiol-specific peroxidase that catalyzes the reduction of hydrogen peroxide and organic hydroperoxides to water and alcohols, respectively. Can reduce H(2)O(2) and short chain organic, fatty acid, and phospholipid hydroperoxides. Also has phospholipase activity, can therefore either reduce the oxidized sn-2 fatty acyl group of phospholipids (peroxidase activity) or hydrolyze the sn-2 ester bond of phospholipids (phospholipase activity). These activities are dependent on binding to phospholipids at acidic pH and to oxidized phospholipds at cytosolic pH. Plays a role in cell protection against oxidative stress by detoxifying peroxides and in phospholipid homeostasis. Exhibits acyl-CoA-dependent lysophospholipid acyltransferase which mediates the conversion of lysophosphatidylcholine (1-acyl-sn-glycero-3-phosphocholine or LPC) into phosphatidylcholine (1,2-diacyl-sn-glycero-3-phosphocholine or PC). Shows a clear preference for LPC as the lysophospholipid and for palmitoyl CoA as the fatty acyl substrate. The protein is Peroxiredoxin-6 (Prdx6) of Rattus norvegicus (Rat).